Reading from the N-terminus, the 1134-residue chain is Tyrosine-protein kinase receptor Tie-1 (1134 aa).

Positions 1 to 22 are cleaved as a signal peptide; sequence MVWWGSSLLLPTLFLASHVGAS. Residues 23–755 lie on the Extracellular side of the membrane; that stretch reads VDLTLLANLR…SRAAEEGLDQ (733 aa). In terms of domain architecture, Ig-like C2-type 1 spans 43 to 123; the sequence is CVSGEAGAGR…VLYVHNSPGA (81 aa). Asparagine 81 and asparagine 159 each carry an N-linked (GlcNAc...) asparagine glycan. EGF-like domains lie at 212 to 254, 256 to 301, and 303 to 343; these read GCGA…TRCE, ACRE…SQCQ, and ACAP…VHCE. Disulfide bonds link cysteine 226–cysteine 235, cysteine 229–cysteine 242, cysteine 244–cysteine 253, cysteine 266–cysteine 276, cysteine 270–cysteine 289, cysteine 291–cysteine 300, cysteine 313–cysteine 325, cysteine 319–cysteine 331, and cysteine 333–cysteine 342. One can recognise an Ig-like C2-type 2 domain in the interval 349–440; that stretch reads PQILSMATEV…GQDSRRFKVN (92 aa). 3 Fibronectin type-III domains span residues 444–543, 546–638, and 642–736; these read PPVP…CPEP, QPWL…LPPS, and APRH…LGNG. Residues asparagine 501, asparagine 592, and asparagine 705 are each glycosylated (N-linked (GlcNAc...) asparagine). A helical membrane pass occupies residues 756-780; sequence QLVLAVVGSVSATCLTILAALLALV. Over 781-1134 the chain is Cytoplasmic; the sequence is CIRRSCLHRR…AGIDATAEEA (354 aa). The 280-residue stretch at 835 to 1114 folds into the Protein kinase domain; that stretch reads ITFEDLIGEG…RMLEARKAYV (280 aa). Residues 841-849 and lysine 866 each bind ATP; that span reads IGEGNFGQV. The Proton acceptor role is filled by aspartate 975. At tyrosine 1003 the chain carries Phosphotyrosine; by autocatalysis.

Belongs to the protein kinase superfamily. Tyr protein kinase family. Tie subfamily. Heterodimer with TEK/TIE2. Interacts with SVEP1 (via C-terminus). Phosphorylated on tyrosine residues in response to ANGPT1, most likely by TEK/TIE2. As to expression, specifically expressed in developing vascular endothelial cells. Abundantly expressed in lung and heart, moderately in brain, liver and kidney, and weakly in thymus, spleen and testis.

It is found in the cell membrane. The catalysed reaction is L-tyrosyl-[protein] + ATP = O-phospho-L-tyrosyl-[protein] + ADP + H(+). Functionally, transmembrane tyrosine-protein kinase that may modulate TEK/TIE2 activity and contribute to the regulation of angiogenesis. The chain is Tyrosine-protein kinase receptor Tie-1 (Tie1) from Mus musculus (Mouse).